Consider the following 284-residue polypeptide: 4-hydroxybenzoate octaprenyltransferase (284 aa).

8 helical membrane-spanning segments follow: residues 16–36 (PIGI…ASDG), 40–60 (WTLL…GCAI), 91–111 (LLVA…LNTL), 132–152 (FFAI…PMGF), 157–177 (NTVP…AVAY), 206–226 (VAAV…VGWQ), 231–251 (TWFA…YTLI), and 259–279 (CFAA…GVVL).

Belongs to the UbiA prenyltransferase family. Mg(2+) is required as a cofactor.

It is found in the cell inner membrane. The enzyme catalyses all-trans-octaprenyl diphosphate + 4-hydroxybenzoate = 4-hydroxy-3-(all-trans-octaprenyl)benzoate + diphosphate. Its pathway is cofactor biosynthesis; ubiquinone biosynthesis. Catalyzes the prenylation of para-hydroxybenzoate (PHB) with an all-trans polyprenyl group. Mediates the second step in the final reaction sequence of ubiquinone-8 (UQ-8) biosynthesis, which is the condensation of the polyisoprenoid side chain with PHB, generating the first membrane-bound Q intermediate 3-octaprenyl-4-hydroxybenzoate. The polypeptide is 4-hydroxybenzoate octaprenyltransferase (Herminiimonas arsenicoxydans).